The following is an 819-amino-acid chain: Serine/threonine-protein phosphatase 1 regulatory subunit 10 (819 aa).

Residues 73 to 147 enclose the TFIIS N-terminal domain; that stretch reads KLLNNWLTYA…NDWMAVIRSQ (75 aa). Disordered regions lie at residues 151 to 204, 296 to 391, and 495 to 785; these read QPAD…KFRS, KIKK…RKTV, and SVPD…GGDM. Basic and acidic residues-rich tracts occupy residues 153-165 and 173-190; these read ADKEKKKKKEDAK and KTSEAKSEDNGDKKEKPK. Residues 305-327 are compositionally biased toward polar residues; the sequence is SPTSNKASPFDSKSPTEASSLTK. Positions 386–415 match the PP1-binding motif motif; that stretch reads KKRKTVSWPEESRLREYFYFELDETERVNV. Residues 495–504 show a composition bias toward basic and acidic residues; that stretch reads SVPDTPHEPD. 2 stretches are compositionally biased toward polar residues: residues 533–543 and 560–578; these read MDQSTESQSPD and MGSSKSPPNTLPGTMQEIL. Basic and acidic residues predominate over residues 589-604; the sequence is KPEDLMKQPDFSEKIK. Residues 606–618 are compositionally biased toward low complexity; it reads LLGSLQNQNQNQG. Composition is skewed to pro residues over residues 635 to 663 and 670 to 695; these read FPPPSQKNHQPPPPHHQPPPPHYPPPGPN and HGPPGGPRMMGPPPPQRDGYWEPPPN. 2 stretches are compositionally biased toward basic and acidic residues: residues 704-715 and 758-777; these read HGGERGGMRGGD and HGDHRGHEGHRGHGGHGDHR. The segment at 785-813 adopts a C3H1-type zinc-finger fold; that stretch reads MSTRPTCRHFMMKGNCRYENNCAFYHPGI.

As to quaternary structure, component of the PNUTS-PP1 complex (also named PTW/PP1 complex).

The protein resides in the nucleus. It localises to the chromosome. Functionally, substrate-recognition component of the PNUTS-PP1 protein phosphatase complex, a protein phosphatase 1 (PP1) complex that promotes RNA polymerase II transcription pause-release, allowing transcription elongation. Promoter-proximal pausing by RNA polymerase II is a transcription halt following transcription initiation but prior to elongation, which acts as a checkpoint to control that transcripts are favorably configured for transcriptional elongation. The PNUTS-PP1 complex mediates the release of RNA polymerase II from promoter-proximal region of genes by catalyzing dephosphorylation of proteins involved in transcription. In some context, PPP1R10/PNUTS also acts as an inhibitor of protein phosphatase 1 (PP1) activity by preventing access to substrates. The polypeptide is Serine/threonine-protein phosphatase 1 regulatory subunit 10 (ppp1r10) (Xenopus laevis (African clawed frog)).